Consider the following 28-residue polypeptide: Kappa-stichotoxin-Shd1a/kappa-stichotoxin-Shd1b (28 aa).

Pro6 carries the 4-hydroxyproline; in form SHTX-1 (Shd1a) modification. 2 disulfide bridges follow: Cys7-Cys19 and Cys10-Cys25.

It belongs to the sea anemone BBH family. In terms of processing, occurs in 2 forms which differ in the post-translational modification of Pro-6. In form SHTX-1 (Shd1a) Pro-6 is a hydroxyproline while in form SHTX-2 (Shd1b) Pro-6 is unmodified.

The protein localises to the secreted. It localises to the nematocyst. Its function is as follows. Kappa-stichotoxin-Shd1a: inhibits voltage-gated potassium channels (Kv). Functionally, kappa-stichotoxin-Shd1b: inhibits voltage-gated potassium channels (Kv). This toxin inhibits the binding of 125I-alpha-dendrotoxin to synaptosomal membranes (IC(50)=270 nM). The protein is Kappa-stichotoxin-Shd1a/kappa-stichotoxin-Shd1b of Stichodactyla haddoni (Saddle carpet anemone).